The primary structure comprises 437 residues: Trigger factor (437 aa).

Residues 163-248 (GDIAVINFEG…LNQIKAKVLP (86 aa)) form the PPIase FKBP-type domain.

Belongs to the FKBP-type PPIase family. Tig subfamily.

The protein resides in the cytoplasm. It carries out the reaction [protein]-peptidylproline (omega=180) = [protein]-peptidylproline (omega=0). Involved in protein export. Acts as a chaperone by maintaining the newly synthesized protein in an open conformation. Functions as a peptidyl-prolyl cis-trans isomerase. The protein is Trigger factor of Bdellovibrio bacteriovorus (strain ATCC 15356 / DSM 50701 / NCIMB 9529 / HD100).